A 462-amino-acid polypeptide reads, in one-letter code: MAAAVNLELDPIFLKALGFLHSKSKDSAEKLKTLLDESLARGIDSSYRPSQKDVEPPKISSTKTVSVKQEPKTSSSLPSGNNNGKVLTTEKVKKEGEKRPADKMKSDITEGADVPKKPRLEKPETRSSPITVQTSKDLAMADLSSFEETSADDFAMEMGLACVVCRQMTVASGNQLVECQECHNLYHQDCHKPQVTDKEVTDPRLVWYCARCTRQMKRMAQKTQKPPQKPAPTVVSVAPAVKDPLVKKPETKLKPETTFLAFKRSEVKASTVVSGNSSSTNVSSSATSGLIGWAAFAAKTTSAGPSTAKLSSAAQNNSGKPATSSANQKPVGLTGLATTSKGGIGSKIGSSNSTSPTVPLKPPPPLTLGKTGLSRSVSCDNVSKVGLPSPSSLVPGSSSQLSGNGNSGTSGPSGSTTNKTASEPSTSPSASLKGPTSQESQLNAMKRLQMVKKKAAQKKLKK.

The interval 39–132 is disordered; the sequence is LARGIDSSYR…PETRSSPITV (94 aa). Residues 59–86 show a composition bias toward polar residues; the sequence is ISSTKTVSVKQEPKTSSSLPSGNNNGKV. Lysine 68 participates in a covalent cross-link: Glycyl lysine isopeptide (Lys-Gly) (interchain with G-Cter in SUMO2). Residues 88–125 are compositionally biased toward basic and acidic residues; sequence TTEKVKKEGEKRPADKMKSDITEGADVPKKPRLEKPET. Serine 128 carries the post-translational modification Phosphoserine. The PHD-type zinc finger occupies 159–215; it reads GLACVVCRQMTVASGNQLVECQECHNLYHQDCHKPQVTDKEVTDPRLVWYCARCTRQ. Lysine 254 participates in a covalent cross-link: Glycyl lysine isopeptide (Lys-Gly) (interchain with G-Cter in SUMO2). The span at 305 to 328 shows a compositional bias: polar residues; the sequence is PSTAKLSSAAQNNSGKPATSSANQ. A disordered region spans residues 305–462; sequence PSTAKLSSAA…KKAAQKKLKK (158 aa). 2 stretches are compositionally biased toward low complexity: residues 347–358 and 382–431; these read KIGSSNSTSPTV and VSKV…PSAS. Residues 434–443 show a composition bias toward polar residues; the sequence is GPTSQESQLN. Basic residues predominate over residues 449-462; it reads QMVKKKAAQKKLKK.

This sequence belongs to the Integrator subunit 12 family. In terms of assembly, component of the Integrator complex, composed of core subunits INTS1, INTS2, INTS3, INTS4, INTS5, INTS6, INTS7, INTS8, INTS9/RC74, INTS10, INTS11/CPSF3L, INTS12, INTS13, INTS14 and INTS15. The core complex associates with protein phosphatase 2A subunits PPP2CA and PPP2R1A, to form the Integrator-PP2A (INTAC) complex. Dephosphorylated at Ser-128 by the PNUTS-PP1 complex, promoting RNA polymerase II transcription pause-release.

It is found in the nucleus. Component of the integrator complex, a multiprotein complex that terminates RNA polymerase II (Pol II) transcription in the promoter-proximal region of genes. The integrator complex provides a quality checkpoint during transcription elongation by driving premature transcription termination of transcripts that are unfavorably configured for transcriptional elongation: the complex terminates transcription by (1) catalyzing dephosphorylation of the C-terminal domain (CTD) of Pol II subunit POLR2A/RPB1 and SUPT5H/SPT5, (2) degrading the exiting nascent RNA transcript via endonuclease activity and (3) promoting the release of Pol II from bound DNA. The integrator complex is also involved in terminating the synthesis of non-coding Pol II transcripts, such as enhancer RNAs (eRNAs), small nuclear RNAs (snRNAs), telomerase RNAs and long non-coding RNAs (lncRNAs). Mediates recruitment of cytoplasmic dynein to the nuclear envelope, probably as component of the integrator complex. This Bos taurus (Bovine) protein is Integrator complex subunit 12 (INTS12).